The chain runs to 564 residues: MVRDWSACGSLLLVMTVAKDRGGPAVAGSGGGVESPELRAAYEVCEAEARQFAVELWAAAETLPVETRPSLYAIASWSAYTDRIIDEGPLEGREERLAQWSADTLADLRAGHSSHPLRRALVDTVRRWGLAEALIEEHLDSARADCAAVPVFETFKDQRRYLRGCSGALAELWVPLLEPRGPEAFRLMSVLGEACQVADLFEDLPDDLAAGRCYLPRQDLRGLGLDVDDLRRGEREEALNAFVDAQLAHWRGLLEETVLAPSTVGARYQIFVHTLLLGAQMHFDEVTLLRSRVLTQGLESLVTGDGRMSRRAARPGPGPVPGHIAVIADGNRRWAEARGLLADQGHRAGIRAVLRLVNAAQRTGIRHVTVYMFSTENWYRSQGEVAALFGAFADWFARGAQTVHELGVRVRWSGRRDRLEESLASSFELLESMTANNDKLTLTICLDYGGREELAAAARALAAEAVAGTIRPEQIGMAEVARHLYVPEMPDVDLLVRTCEQRISNFLPWHLAYAELVFDPAPWPDFDLARLRDAVDSYAGRERRFGGDAELPAQAGNLEPARNG.

Residue aspartate 329 is part of the active site. Position 329 (aspartate 329) interacts with Mg(2+). Residues 330–333 (GNRR), tryptophan 334, histidine 346, and 374–376 (STE) contribute to the substrate site. The active-site Proton acceptor is the asparagine 377. Substrate-binding positions include tryptophan 378, arginine 380, arginine 497, and 502–504 (RIS). Glutamate 515 is a binding site for Mg(2+).

This sequence in the N-terminal section; belongs to the phytoene/squalene synthase family. The protein in the C-terminal section; belongs to the UPP synthase family. As to quaternary structure, homodimer. It depends on Mg(2+) as a cofactor.

The enzyme catalyses 2 (2E,6E,10E)-geranylgeranyl diphosphate = 15-cis-phytoene + 2 diphosphate. It functions in the pathway carotenoid biosynthesis; phytoene biosynthesis; all-trans-phytoene from geranylgeranyl diphosphate: step 1/1. Functionally, catalyzes the reaction from prephytoene diphosphate to phytoene. In terms of biological role, catalyzes the condensation of isopentenyl diphosphate (IPP) with allylic pyrophosphates generating different type of terpenoids. The protein is Bifunctional protein CrtB/UppS (crtB/uppS3) of Streptomyces coelicolor (strain ATCC BAA-471 / A3(2) / M145).